Here is a 100-residue protein sequence, read N- to C-terminus: Urease subunit gamma (100 aa).

This sequence belongs to the urease gamma subunit family. Heterotrimer of UreA (gamma), UreB (beta) and UreC (alpha) subunits. Three heterotrimers associate to form the active enzyme.

It localises to the cytoplasm. The enzyme catalyses urea + 2 H2O + H(+) = hydrogencarbonate + 2 NH4(+). It participates in nitrogen metabolism; urea degradation; CO(2) and NH(3) from urea (urease route): step 1/1. The sequence is that of Urease subunit gamma from Chelativorans sp. (strain BNC1).